The primary structure comprises 226 residues: Sugar transporter SWEET1 (226 aa).

7 helical membrane-spanning segments follow: residues 8–28 (LLST…AMIC), 42–62 (GVPF…GVLT), 67–87 (IVLV…IYYV), 94–114 (AFVR…VVYT), 127–147 (ITGI…LATL), 161–181 (LPLI…GILI), and 185–205 (FIQI…SLFV). Positions 8–92 (LLSTTAVIST…LIYYVFTVNK (85 aa)) constitute a MtN3/slv 1 domain. The MtN3/slv 2 domain occupies 129 to 210 (GIFCCIVTVC…LSLFVVYPPR (82 aa)).

Belongs to the SWEET sugar transporter family.

It localises to the golgi apparatus membrane. The protein resides in the cell membrane. Its function is as follows. Mediates both low-affinity uptake and efflux of sugar across the membrane. This Drosophila pseudoobscura pseudoobscura (Fruit fly) protein is Sugar transporter SWEET1 (slv).